The chain runs to 37 residues: M-oxotoxin-Ot2c (37 aa).

As to expression, expressed by the venom gland.

It localises to the secreted. In terms of biological role, disrupts biological membranes, particularly those rich in phosphocholine. Has antimicrobial activity against Gram-negative bacterium E.coli, Gram-positive bacteria B.subtilis and S.aureus, and hemolytic activity against sheep, pig and guinea pig red blood cells. Has insecticidal activity against S.frugiperda ovarian cells by opening non-selective ion channels. Enhances the insecticidal activity of spider venom neurotoxic peptides. The chain is M-oxotoxin-Ot2c from Oxyopes takobius (Lynx spider).